The primary structure comprises 239 residues: NAD-dependent protein deacylase (239 aa).

The Deacetylase sirtuin-type domain occupies M1–M239. NAD(+) is bound at residue G8–W27. Substrate contacts are provided by Y52 and R55. Q93–D96 is a binding site for NAD(+). The active-site Proton acceptor is H111. NAD(+) is bound by residues G182–S184, N207–D209, and A225.

This sequence belongs to the sirtuin family. Class III subfamily.

It localises to the cytoplasm. It carries out the reaction N(6)-acetyl-L-lysyl-[protein] + NAD(+) + H2O = 2''-O-acetyl-ADP-D-ribose + nicotinamide + L-lysyl-[protein]. The catalysed reaction is N(6)-succinyl-L-lysyl-[protein] + NAD(+) + H2O = 2''-O-succinyl-ADP-D-ribose + nicotinamide + L-lysyl-[protein]. Its function is as follows. NAD-dependent lysine deacetylase and desuccinylase that specifically removes acetyl and succinyl groups on target proteins. Modulates the activities of several proteins which are inactive in their acylated form. The polypeptide is NAD-dependent protein deacylase (Rhodopirellula baltica (strain DSM 10527 / NCIMB 13988 / SH1)).